The chain runs to 112 residues: DNA-binding protein Bv3F (112 aa).

The tract at residues 65–92 (KRNSKRMSTVPKYRDPATGKTWSGRGRQ) is disordered. 2 DNA-binding regions span residues 89–94 (RGRQPA) and 89–95 (RGRQPAW).

This sequence belongs to the histone-like protein H-NS family. In terms of assembly, homodimer that oligomerizes on DNA into higher-order complexes that form bridges between disparate regions of DNA compacting it.

The protein resides in the cytoplasm. It localises to the nucleoid. Its function is as follows. A DNA-binding protein implicated in transcriptional repression and chromosome organization and compaction. Binds in the minor groove of AT-rich DNA. Binds nucleation sites in AT-rich DNA and bridges them, forming higher-order nucleoprotein complexes and condensing the chromosome. As many horizontally transferred genes are AT-rich, it plays a central role in silencing foreign genes. The sequence is that of DNA-binding protein Bv3F from Burkholderia vietnamiensis (strain G4 / LMG 22486) (Burkholderia cepacia (strain R1808)).